The primary structure comprises 363 residues: Phosphoserine aminotransferase (363 aa).

Arg-42 contacts L-glutamate. Pyridoxal 5'-phosphate-binding positions include 76–77 (GR), Trp-102, Thr-156, Asp-175, and Gln-198. Position 199 is an N6-(pyridoxal phosphate)lysine (Lys-199). Position 240 to 241 (240 to 241 (NT)) interacts with pyridoxal 5'-phosphate.

Belongs to the class-V pyridoxal-phosphate-dependent aminotransferase family. SerC subfamily. In terms of assembly, homodimer. Pyridoxal 5'-phosphate serves as cofactor.

The protein resides in the cytoplasm. The catalysed reaction is O-phospho-L-serine + 2-oxoglutarate = 3-phosphooxypyruvate + L-glutamate. The enzyme catalyses 4-(phosphooxy)-L-threonine + 2-oxoglutarate = (R)-3-hydroxy-2-oxo-4-phosphooxybutanoate + L-glutamate. Its pathway is amino-acid biosynthesis; L-serine biosynthesis; L-serine from 3-phospho-D-glycerate: step 2/3. It participates in cofactor biosynthesis; pyridoxine 5'-phosphate biosynthesis; pyridoxine 5'-phosphate from D-erythrose 4-phosphate: step 3/5. In terms of biological role, catalyzes the reversible conversion of 3-phosphohydroxypyruvate to phosphoserine and of 3-hydroxy-2-oxo-4-phosphonooxybutanoate to phosphohydroxythreonine. This is Phosphoserine aminotransferase from Shewanella denitrificans (strain OS217 / ATCC BAA-1090 / DSM 15013).